A 365-amino-acid polypeptide reads, in one-letter code: MTEAWNVAVFAARRSRDDDDTTRGSVFTYTNTNNTRGPFEGPNYHIAPRWVYNLVSFFMIIVVIASCFTNGLVLVATAKFKKLRHPLNWILVNLAFVDLVETLVASTISVFNQIFGYFILGHPLCVIEGYVVSSCGITGLWSLAIISWERWFVVCKPFGNIKFDSKLAIIGIVFSWVWAWGWSAPPIFGWSRYWPHGLKTSCGPDVFSGSVELGCQSFMLTLMITCCFLPLFIIIVCYLQVWMAIRAVAAQQKESESTQKAEREVSRMVVVMIVAFCICWGPYASFVSFAAANPGYAFHPLAAALPAYFAKSATIYNPVIYVFMNRQFRNCIMQLFGKKVDDGSEASTTSRTEVSSVSNSSVAPA.

Residues 1–51 lie on the Extracellular side of the membrane; the sequence is MTEAWNVAVFAARRSRDDDDTTRGSVFTYTNTNNTRGPFEGPNYHIAPRWV. N33 is a glycosylation site (N-linked (GlcNAc...) asparagine). A helical membrane pass occupies residues 52–76; that stretch reads YNLVSFFMIIVVIASCFTNGLVLVA. The Cytoplasmic segment spans residues 77–88; that stretch reads TAKFKKLRHPLN. Residues 89-113 form a helical membrane-spanning segment; the sequence is WILVNLAFVDLVETLVASTISVFNQ. Topologically, residues 114 to 128 are extracellular; sequence IFGYFILGHPLCVIE. Cysteines 125 and 202 form a disulfide. Residues 129–148 traverse the membrane as a helical segment; it reads GYVVSSCGITGLWSLAIISW. Residues 149-167 are Cytoplasmic-facing; sequence ERWFVVCKPFGNIKFDSKL. The chain crosses the membrane as a helical span at residues 168-191; that stretch reads AIIGIVFSWVWAWGWSAPPIFGWS. Over 192–217 the chain is Extracellular; the sequence is RYWPHGLKTSCGPDVFSGSVELGCQS. Residues 218 to 245 form a helical membrane-spanning segment; sequence FMLTLMITCCFLPLFIIIVCYLQVWMAI. Over 246–267 the chain is Cytoplasmic; the sequence is RAVAAQQKESESTQKAEREVSR. A helical membrane pass occupies residues 268–291; sequence MVVVMIVAFCICWGPYASFVSFAA. The Extracellular portion of the chain corresponds to 292 to 299; it reads ANPGYAFH. Residues 300-324 traverse the membrane as a helical segment; that stretch reads PLAAALPAYFAKSATIYNPVIYVFM. K311 carries the N6-(retinylidene)lysine modification. The Cytoplasmic segment spans residues 325–365; it reads NRQFRNCIMQLFGKKVDDGSEASTTSRTEVSSVSNSSVAPA. The interval 342-365 is disordered; that stretch reads DGSEASTTSRTEVSSVSNSSVAPA. Residues 345–365 show a composition bias toward low complexity; the sequence is EASTTSRTEVSSVSNSSVAPA.

It belongs to the G-protein coupled receptor 1 family. Opsin subfamily. Phosphorylated on some or all of the serine and threonine residues present in the C-terminal region. As to expression, in this lizard the color pigments are found in the rod-shaped photoreceptor cells which have been derived from ancestral cone-like photoreceptors.

The protein localises to the membrane. Functionally, visual pigments are the light-absorbing molecules that mediate vision. They consist of an apoprotein, opsin, covalently linked to cis-retinal. The protein is Green-sensitive opsin P521 of Gekko gecko (Tokay gecko).